We begin with the raw amino-acid sequence, 72 residues long: Translation initiation factor IF-1 (72 aa).

The region spanning 1-72 is the S1-like domain; the sequence is MAKEEMLEFP…TKGRINYRFK (72 aa).

The protein belongs to the IF-1 family. In terms of assembly, component of the 30S ribosomal translation pre-initiation complex which assembles on the 30S ribosome in the order IF-2 and IF-3, IF-1 and N-formylmethionyl-tRNA(fMet); mRNA recruitment can occur at any time during PIC assembly.

Its subcellular location is the cytoplasm. Functionally, one of the essential components for the initiation of protein synthesis. Stabilizes the binding of IF-2 and IF-3 on the 30S subunit to which N-formylmethionyl-tRNA(fMet) subsequently binds. Helps modulate mRNA selection, yielding the 30S pre-initiation complex (PIC). Upon addition of the 50S ribosomal subunit IF-1, IF-2 and IF-3 are released leaving the mature 70S translation initiation complex. In Jannaschia sp. (strain CCS1), this protein is Translation initiation factor IF-1.